The following is a 500-amino-acid chain: tRNA nucleotidyltransferase cca1 (500 aa).

The flexible loop stretch occupies residues aspartate 122–glutamate 139. Residues glutamate 231–leucine 241 carry the ERhxxExxxhh motif motif.

Belongs to the tRNA nucleotidyltransferase/poly(A) polymerase family.

The catalysed reaction is a tRNA precursor + 2 CTP = a tRNA with a 3' CC end + 2 diphosphate. In terms of biological role, tRNA nucleotidyltransferase involved in the synthesis of the tRNA CCA terminus. In contrast to what is usually observed in eukaryotes for which one enzyme synthesizes the whole tRNA CCA terminus, in S.pombe, cca1 specifically adds two cytidine residues to a tRNA substrate lacking this sequence while cca2 specifically adds the terminal adenosine residue thereby completing the CCA sequence. This Schizosaccharomyces pombe (strain 972 / ATCC 24843) (Fission yeast) protein is tRNA nucleotidyltransferase cca1.